The sequence spans 75 residues: U9-theraphotoxin-Cg1a (75 aa).

Residues Met-1 to Ala-21 form the signal peptide. The propeptide occupies Asn-22 to Arg-29. 3 cysteine pairs are disulfide-bonded: Cys-31-Cys-46, Cys-38-Cys-51, and Cys-45-Cys-58.

The protein belongs to the neurotoxin 10 (Hwtx-1) family. 43 (Jztx-49) subfamily. Expressed by the venom gland.

The protein resides in the secreted. Its function is as follows. Probable ion channel inhibitor. The protein is U9-theraphotoxin-Cg1a of Chilobrachys guangxiensis (Chinese earth tiger tarantula).